The primary structure comprises 234 residues: 1-(5-phosphoribosyl)-5-[(5-phosphoribosylamino)methylideneamino] imidazole-4-carboxamide isomerase (234 aa).

Aspartate 9 functions as the Proton acceptor in the catalytic mechanism. The Proton donor role is filled by aspartate 131.

The protein belongs to the HisA/HisF family.

It localises to the cytoplasm. It catalyses the reaction 1-(5-phospho-beta-D-ribosyl)-5-[(5-phospho-beta-D-ribosylamino)methylideneamino]imidazole-4-carboxamide = 5-[(5-phospho-1-deoxy-D-ribulos-1-ylimino)methylamino]-1-(5-phospho-beta-D-ribosyl)imidazole-4-carboxamide. It functions in the pathway amino-acid biosynthesis; L-histidine biosynthesis; L-histidine from 5-phospho-alpha-D-ribose 1-diphosphate: step 4/9. This Staphylococcus epidermidis (strain ATCC 12228 / FDA PCI 1200) protein is 1-(5-phosphoribosyl)-5-[(5-phosphoribosylamino)methylideneamino] imidazole-4-carboxamide isomerase.